Reading from the N-terminus, the 819-residue chain is MKNLANIKLYWNENDFLIADMLLILKLSPRSSSDCLLDLRDRKWELVCCKELNIGNERNPLNVPLFELPVNSLELQNSVSNDMFKHVYSQNVELNHKTQVDFTEQLIPKKSLNKLNGTLRETMSRMPSFESISLSETSNALDDSCFNDDWITIESEFSPPIDRGMTLEAMDSQNDTLFTSKQLNNGPNFPVEKATFFLESNMGLSQRAAATSTTPVCNISSVTSAINSVGEISNASHSSSTSELPCTYGNTSSIFQVKNEMSNIKSAISEGYIAHDQQSKKVSVQNIKKEFLIPFEFSLEGGFLNYNKTFSNLYKVLSETEKTRDSKVWFTFRLVLKTKPLYASESEFYETKLNFFTFPLECAINFHIDCSCFDDWRLFSLKESSSVAVPIPKIKKESGRSMFQSLLFQFNHCIPFRLSWINYKQSQLNIILTETTIRPRICAAYQKLEYNILVLLNEKPSSGSQLILSASPTCTIENIYIENTRLHFSKSQTPEQTVISFIDVQCVKVTEATKTLELSVILSERLVYETALKLPVIKYVKGDNRFCFKQLLEYYDIYLKFKLLADWRLLTNPVLQIQEISDYCHFKLLKKVNRNLQIKTNYPTQEFHLLRPTIKILQISKHEYFLHFSSSYIFNDARERDVYGVKLSKNMWISWAYVDNCEANFFCKDGTYFFRTTSRKQILLLEIGILIKPERYNLFKYRVYLPQFLPPTDSRTLVEFQTIVYTNSTLLFDGSFYFSQNGGFDFEPRQNYTYFDFKSEFIILQNSYSIYGPAKNIIKLLLELIEVILNVNVSTTAMCLLTLLIGIYLILQVVFIYTN.

A helical transmembrane segment spans residues 797 to 817 (AMCLLTLLIGIYLILQVVFIY).

It localises to the membrane. Its function is as follows. Has a role in meiosis. This chain is Meiotically up-regulated gene 45 protein (mug45), found in Schizosaccharomyces pombe (strain 972 / ATCC 24843) (Fission yeast).